The following is a 100-amino-acid chain: NADH-quinone oxidoreductase subunit K (100 aa).

Transmembrane regions (helical) follow at residues 1–21 (MIGL…GLAG), 28–48 (ILLL…GFVA), and 64–84 (FIIS…ILWF).

It belongs to the complex I subunit 4L family. NDH-1 is composed of 14 different subunits. Subunits NuoA, H, J, K, L, M, N constitute the membrane sector of the complex.

Its subcellular location is the cell inner membrane. It catalyses the reaction a quinone + NADH + 5 H(+)(in) = a quinol + NAD(+) + 4 H(+)(out). NDH-1 shuttles electrons from NADH, via FMN and iron-sulfur (Fe-S) centers, to quinones in the respiratory chain. The immediate electron acceptor for the enzyme in this species is believed to be ubiquinone. Couples the redox reaction to proton translocation (for every two electrons transferred, four hydrogen ions are translocated across the cytoplasmic membrane), and thus conserves the redox energy in a proton gradient. The polypeptide is NADH-quinone oxidoreductase subunit K (Helicobacter pylori (strain ATCC 700392 / 26695) (Campylobacter pylori)).